The chain runs to 142 residues: Struthiocalcin-2 (142 aa).

3 disulfide bridges follow: cysteine 6–cysteine 17, cysteine 34–cysteine 138, and cysteine 113–cysteine 130. One can recognise a C-type lectin domain in the interval 13–139 (FDGRCYGFFP…CSDRKPFICE (127 aa)). 3 positions are modified to phosphoserine: serine 62, serine 66, and serine 68.

It is found in the secreted. The protein resides in the extracellular space. The protein localises to the extracellular matrix. The protein is Struthiocalcin-2 of Struthio camelus (Common ostrich).